Consider the following 241-residue polypeptide: Platelet-derived growth factor subunit B (241 aa).

The N-terminal stretch at 1-20 is a signal peptide; sequence MNRCWALFLPLCCYLRLVSA. Positions 21–81 are cleaved as a propeptide — removed in mature form; it reads EGDPIPEELY…ELESSSRGRR (61 aa). N-linked (GlcNAc...) asparagine glycosylation occurs at asparagine 63. 3 cysteine pairs are disulfide-bonded: cysteine 97-cysteine 141, cysteine 130-cysteine 178, and cysteine 134-cysteine 180. Positions 191 to 241 are cleaved as a propeptide — removed in mature form; that stretch reads RSPGTSREQRAKTPQARVTIRTVRIRRPPKGKHRKFKHTHDKAALKETLGA. Positions 217 to 230 are enriched in basic residues; it reads RPPKGKHRKFKHTH. The interval 217 to 241 is disordered; it reads RPPKGKHRKFKHTHDKAALKETLGA.

Belongs to the PDGF/VEGF growth factor family. As to quaternary structure, antiparallel homodimer; disulfide-linked. Antiparallel heterodimer with PDGFA; disulfide-linked. The PDGFB homodimer interacts with PDGFRA and PDGFRB homodimers, and with heterodimers formed by PDGFRA and PDGFRB. The heterodimer composed of PDGFA and PDGFB interacts with PDGFRB homodimers, and with heterodimers formed by PDGFRA and PDGFRB. Interacts with XLKD1. Interacts with LRP1. Interacts with SORL1 (via the N-terminal ectodomain). Interacts with CD82; this interaction inhibits PDGFB-mediated signaling pathway. Localized to vascular smooth muscle cells. Also weakly expressed by cortical interstitial cells but absent in tubules. Up-regulated in areas of renal fibrosis. In mice with unilateral ureteral obstruction, an increased expression in interstitial cells and in some tubules observed after day 4.

It localises to the secreted. Its function is as follows. Growth factor that plays an essential role in the regulation of embryonic development, cell proliferation, cell migration, survival and chemotaxis. Potent mitogen for cells of mesenchymal origin. Required for normal proliferation and recruitment of pericytes and vascular smooth muscle cells in the central nervous system, skin, lung, heart and placenta. Required for normal blood vessel development, and for normal development of kidney glomeruli. Plays an important role in wound healing. Signaling is modulated by the formation of heterodimers with PDGFA. This chain is Platelet-derived growth factor subunit B (Pdgfb), found in Mus musculus (Mouse).